The chain runs to 317 residues: Ribosomal protein L11 methyltransferase (317 aa).

S-adenosyl-L-methionine-binding residues include T158, G179, D201, and N244.

It belongs to the methyltransferase superfamily. PrmA family.

It is found in the cytoplasm. It carries out the reaction L-lysyl-[protein] + 3 S-adenosyl-L-methionine = N(6),N(6),N(6)-trimethyl-L-lysyl-[protein] + 3 S-adenosyl-L-homocysteine + 3 H(+). Functionally, methylates ribosomal protein L11. The sequence is that of Ribosomal protein L11 methyltransferase from Streptococcus uberis (strain ATCC BAA-854 / 0140J).